A 440-amino-acid chain; its full sequence is Argininosuccinate lyase (440 aa).

Belongs to the lyase 1 family. Argininosuccinate lyase subfamily.

It localises to the cytoplasm. The catalysed reaction is 2-(N(omega)-L-arginino)succinate = fumarate + L-arginine. Its pathway is amino-acid biosynthesis; L-arginine biosynthesis; L-arginine from L-ornithine and carbamoyl phosphate: step 3/3. The polypeptide is Argininosuccinate lyase (Clostridium botulinum (strain Langeland / NCTC 10281 / Type F)).